The chain runs to 263 residues: uncharacterized protein (263 aa).

31 to 38 (GPTGSGKT) is a binding site for ATP.

This sequence belongs to the CbbQ/NirQ/NorQ/GpvN family.

This is an uncharacterized protein from Staphylococcus aureus (strain NCTC 8325 / PS 47).